A 1166-amino-acid chain; its full sequence is Serine-aspartate repeat-containing protein E (1166 aa).

The N-terminal stretch at 1–52 (MINRDNKKAITKKGMISNRLNKFSIRKYTVGTASILVGTTLIFGLGNQEAKA) is a signal peptide. The YSIRK-G/S signaling motif signature appears at 23 to 34 (FSIRKYTVGTAS). A ligand binding A region region spans residues 53-606 (AENTSTENAK…GDGTVKPEEK (554 aa)). The interval 54-253 (ENTSTENAKQ…HSTKPVATAP (200 aa)) is disordered. The segment covering 61-75 (AKQDDATTSDNKEVV) has biased composition (basic and acidic residues). Residues 77–90 (ETENNSTTENNSTN) are compositionally biased toward low complexity. Over residues 92-108 (IKKETNTDSQPEAKKES) the composition is skewed to basic and acidic residues. Residues 118-129 (NNVTATTETKPQ) are compositionally biased toward polar residues. Residues 130 to 145 (NIEKENVKPSTDKTAT) are compositionally biased toward basic and acidic residues. A compositionally biased stretch (low complexity) spans 166 to 178 (TTKPSTSEPSTSE). Positions 179–212 (IQTKPTTPQESTNIENSQPQPTPSKVDNQVTDAT) are enriched in polar residues. The segment covering 221 to 246 (SKEELKKNPEKLKELVRNDSNTDHST) has biased composition (basic and acidic residues). CNA-B domains follow at residues 607–719 (LYKI…YKEP), 720–829 (KYNL…YKTP), and 830–940 (KYSL…EEDT). The tract at residues 904 to 1141 (VTNTTEDDKD…TGSENNGSNN (238 aa)) is disordered. Composition is skewed to acidic residues over residues 908–918 (TEDDKDADGGE) and 935–1105 (YFEE…DSDS). Residues 1129–1133 (LPETG) carry the LPXTG sorting signal motif. T1132 carries the post-translational modification Pentaglycyl murein peptidoglycan amidated threonine. A propeptide spans 1133 to 1166 (GSENNGSNNATLFGGLFAALGSLLLFGRRKKQNK) (removed by sortase).

The protein belongs to the serine-aspartate repeat-containing protein (SDr) family. Interacts with host complement factor H/CFAH (via C-terminus). Interacts with host complement regulator C4BPA.

The protein localises to the secreted. Its subcellular location is the cell wall. Its function is as follows. Cell surface-associated calcium-binding protein which plays an important role in adhesion and pathogenesis. Contributes to the resistance to killing by innate immune components in blood and thus attenuates bacterial clearance by interacting with host complement factor H/CFAH and modulating its activity. Also inhibits bacterial opsonization and killing by interacting with host complement regulator C4BPA and thus inhibiting classical complement pathway activation. The protein is Serine-aspartate repeat-containing protein E (sdrE) of Staphylococcus aureus (strain COL).